Reading from the N-terminus, the 499-residue chain is Glycerol kinase (499 aa).

An ADP-binding site is contributed by T13. Positions 13, 14, and 15 each coordinate ATP. T13 is a binding site for sn-glycerol 3-phosphate. R17 provides a ligand contact to ADP. Sn-glycerol 3-phosphate is bound by residues R83, E84, Y135, and D245. Positions 83, 84, 135, 245, and 246 each coordinate glycerol. 2 residues coordinate ADP: T267 and G310. Residues T267, G310, Q314, and G411 each coordinate ATP. Positions 411 and 415 each coordinate ADP.

The protein belongs to the FGGY kinase family.

The catalysed reaction is glycerol + ATP = sn-glycerol 3-phosphate + ADP + H(+). It functions in the pathway polyol metabolism; glycerol degradation via glycerol kinase pathway; sn-glycerol 3-phosphate from glycerol: step 1/1. Its activity is regulated as follows. Inhibited by fructose 1,6-bisphosphate (FBP). Key enzyme in the regulation of glycerol uptake and metabolism. Catalyzes the phosphorylation of glycerol to yield sn-glycerol 3-phosphate. In Xanthomonas campestris pv. campestris (strain ATCC 33913 / DSM 3586 / NCPPB 528 / LMG 568 / P 25), this protein is Glycerol kinase.